The sequence spans 196 residues: DnaA initiator-associating protein DiaA (196 aa).

The 163-residue stretch at 34-196 (MVQSLLNGNK…DNTLFPHQND (163 aa)) folds into the SIS domain.

This sequence belongs to the SIS family. DiaA subfamily. Homotetramer; dimer of dimers.

In terms of biological role, required for the timely initiation of chromosomal replication via direct interactions with the DnaA initiator protein. This chain is DnaA initiator-associating protein DiaA, found in Pectobacterium atrosepticum (strain SCRI 1043 / ATCC BAA-672) (Erwinia carotovora subsp. atroseptica).